The primary structure comprises 167 residues: uncharacterized protein (167 aa).

Belongs to the A.longa ORF167/ORF288 family.

It is found in the plastid. This is an uncharacterized protein from Euglena longa (Euglenophycean alga).